Here is a 441-residue protein sequence, read N- to C-terminus: D-inositol 3-phosphate glycosyltransferase (441 aa).

H38 contributes to the 1D-myo-inositol 3-phosphate binding site. Residues 44-45 and G52 contribute to the UDP-N-acetyl-alpha-D-glucosamine site; that span reads QP. 1D-myo-inositol 3-phosphate-binding positions include 49–54, K107, Y140, T164, and R184; that span reads DAGGMN. UDP-N-acetyl-alpha-D-glucosamine is bound by residues R258, K263, and Q316. Mg(2+) contacts are provided by F325, Q326, and A328. UDP-N-acetyl-alpha-D-glucosamine contacts are provided by E338 and E346. T352 lines the Mg(2+) pocket.

Belongs to the glycosyltransferase group 1 family. MshA subfamily. As to quaternary structure, homodimer.

The enzyme catalyses 1D-myo-inositol 3-phosphate + UDP-N-acetyl-alpha-D-glucosamine = 1D-myo-inositol 2-acetamido-2-deoxy-alpha-D-glucopyranoside 3-phosphate + UDP + H(+). In terms of biological role, catalyzes the transfer of a N-acetyl-glucosamine moiety to 1D-myo-inositol 3-phosphate to produce 1D-myo-inositol 2-acetamido-2-deoxy-glucopyranoside 3-phosphate in the mycothiol biosynthesis pathway. The chain is D-inositol 3-phosphate glycosyltransferase from Mycolicibacterium paratuberculosis (strain ATCC BAA-968 / K-10) (Mycobacterium paratuberculosis).